The following is a 353-amino-acid chain: Polycomb group RING finger protein 6 (353 aa).

Residues 1–116 (MDEAETDATE…FSLRLESGRA (116 aa)) form a disordered region. Residues 9 to 19 (TENKRASEAKR) are compositionally biased toward basic and acidic residues. Positions 23–39 (MPPPPPPPPPISPPALI) are enriched in pro residues. Ser34 bears the Phosphoserine mark. A compositionally biased stretch (low complexity) spans 40 to 52 (PAPAAGEEGPASL). The span at 69 to 82 (EPERSLGRLRGRFE) shows a compositional bias: basic and acidic residues. Residues 71 to 112 (ERSLGRLRGRFEDYDEELEEEEEMEEEEEEEEEMSHFSLRLE) are a coiled coil. Acidic residues predominate over residues 83–103 (DYDEELEEEEEMEEEEEEEEE). Position 118 is a phosphoserine (Ser118). The RING-type zinc finger occupies 137–176 (CSICKGYLIDATTITECLHTFCKSCIVRHFYYSNRCPKCN). Residues Lys226 and Lys237 each participate in a glycyl lysine isopeptide (Lys-Gly) (interchain with G-Cter in SUMO2) cross-link.

As to quaternary structure, component of a PRC1-like complex. Interacts with BMI1/PCGF4, RING1 and RNF2. Interacts with KDM5D. Interacts with CBX4, CBX6, CBX7 and CBX8. In terms of processing, phosphorylated during mitosis. Expressed in ovary, testis, stomach, liver, thymus and kidney (at protein level).

It is found in the nucleus. Functionally, transcriptional repressor. May modulate the levels of histone H3K4Me3 by activating KDM5D histone demethylase. Component of a Polycomb group (PcG) multiprotein PRC1-like complex, a complex class required to maintain the transcriptionally repressive state of many genes, including Hox genes, throughout development. PcG PRC1 complex acts via chromatin remodeling and modification of histones; it mediates monoubiquitination of histone H2A 'Lys-119', rendering chromatin heritably changed in its expressibility. Within the PRC1-like complex, regulates RNF2 ubiquitin ligase activity. The polypeptide is Polycomb group RING finger protein 6 (Pcgf6) (Mus musculus (Mouse)).